We begin with the raw amino-acid sequence, 337 residues long: UDP-3-O-acylglucosamine N-acyltransferase (337 aa).

H238 (proton acceptor) is an active-site residue.

This sequence belongs to the transferase hexapeptide repeat family. LpxD subfamily. As to quaternary structure, homotrimer.

The enzyme catalyses a UDP-3-O-[(3R)-3-hydroxyacyl]-alpha-D-glucosamine + a (3R)-hydroxyacyl-[ACP] = a UDP-2-N,3-O-bis[(3R)-3-hydroxyacyl]-alpha-D-glucosamine + holo-[ACP] + H(+). It functions in the pathway bacterial outer membrane biogenesis; LPS lipid A biosynthesis. Catalyzes the N-acylation of UDP-3-O-acylglucosamine using 3-hydroxyacyl-ACP as the acyl donor. Is involved in the biosynthesis of lipid A, a phosphorylated glycolipid that anchors the lipopolysaccharide to the outer membrane of the cell. The polypeptide is UDP-3-O-acylglucosamine N-acyltransferase (Xanthomonas axonopodis pv. citri (strain 306)).